A 296-amino-acid polypeptide reads, in one-letter code: GTPase Era (296 aa).

Residues 7–174 (KCSMSAIVGT…VDYLCETSPY (168 aa)) enclose the Era-type G domain. The segment at 15–22 (GTTNAGKS) is G1. Position 15–22 (15–22 (GTTNAGKS)) interacts with GTP. A G2 region spans residues 41-45 (QTTRV). Positions 62–65 (DTPG) are G3. Residues 62-66 (DTPGI) and 124-127 (NKID) each bind GTP. The G4 stretch occupies residues 124 to 127 (NKID). The tract at residues 153-155 (ISA) is G5. One can recognise a KH type-2 domain in the interval 205 to 282 (LRHELPYSLS…HLFLFVKVRE (78 aa)).

Belongs to the TRAFAC class TrmE-Era-EngA-EngB-Septin-like GTPase superfamily. Era GTPase family. In terms of assembly, monomer.

It localises to the cytoplasm. It is found in the cell inner membrane. Its function is as follows. An essential GTPase that binds both GDP and GTP, with rapid nucleotide exchange. Plays a role in 16S rRNA processing and 30S ribosomal subunit biogenesis and possibly also in cell cycle regulation and energy metabolism. The chain is GTPase Era from Ehrlichia ruminantium (strain Gardel).